The following is a 157-amino-acid chain: MSGEVYILWLLSLIQTLSAYGADLSSEACRELGFSSCWGCSSCDLLGEFSLSSIQPVCKQCCQQEVHMESRKLYPGAILEVCGUKLGRFPQVQAFVRSDKPKMFKGLQIKYVRGADPILKLLDDNGNIAEEPSILKWNTDSVEEFLSEKLEVYNTDL.

A signal peptide spans 1 to 19 (MSGEVYILWLLSLIQTLSA). Selenocysteine 84 is a non-standard amino acid (selenocysteine).

The protein belongs to the selenoprotein M/F family. In terms of tissue distribution, expressed in the brain, liver and retina. Localized to the retinal ganglion cell layer, the inner nuclear layer and the outer nuclear layer at both parr and smolt stages.

The protein localises to the endoplasmic reticulum lumen. Functionally, may be involved in redox reactions associated with the formation of disulfide bonds. May contribute to the quality control of protein folding in the endoplasmic reticulum. May be involved in retinal development. This chain is Selenoprotein F, found in Oncorhynchus mykiss (Rainbow trout).